Here is a 158-residue protein sequence, read N- to C-terminus: NAD(P)H-quinone oxidoreductase subunit J, chloroplastic (158 aa).

It belongs to the complex I 30 kDa subunit family. As to quaternary structure, NDH is composed of at least 16 different subunits, 5 of which are encoded in the nucleus.

Its subcellular location is the plastid. It localises to the chloroplast thylakoid membrane. It catalyses the reaction a plastoquinone + NADH + (n+1) H(+)(in) = a plastoquinol + NAD(+) + n H(+)(out). It carries out the reaction a plastoquinone + NADPH + (n+1) H(+)(in) = a plastoquinol + NADP(+) + n H(+)(out). Functionally, NDH shuttles electrons from NAD(P)H:plastoquinone, via FMN and iron-sulfur (Fe-S) centers, to quinones in the photosynthetic chain and possibly in a chloroplast respiratory chain. The immediate electron acceptor for the enzyme in this species is believed to be plastoquinone. Couples the redox reaction to proton translocation, and thus conserves the redox energy in a proton gradient. The sequence is that of NAD(P)H-quinone oxidoreductase subunit J, chloroplastic from Drimys granadensis.